Reading from the N-terminus, the 259-residue chain is Acyl-[acyl-carrier-protein]--UDP-N-acetylglucosamine O-acyltransferase (259 aa).

The protein belongs to the transferase hexapeptide repeat family. LpxA subfamily. In terms of assembly, homotrimer.

The protein resides in the cytoplasm. It carries out the reaction a (3R)-hydroxyacyl-[ACP] + UDP-N-acetyl-alpha-D-glucosamine = a UDP-3-O-[(3R)-3-hydroxyacyl]-N-acetyl-alpha-D-glucosamine + holo-[ACP]. The protein operates within glycolipid biosynthesis; lipid IV(A) biosynthesis; lipid IV(A) from (3R)-3-hydroxytetradecanoyl-[acyl-carrier-protein] and UDP-N-acetyl-alpha-D-glucosamine: step 1/6. In terms of biological role, involved in the biosynthesis of lipid A, a phosphorylated glycolipid that anchors the lipopolysaccharide to the outer membrane of the cell. The protein is Acyl-[acyl-carrier-protein]--UDP-N-acetylglucosamine O-acyltransferase of Nautilia profundicola (strain ATCC BAA-1463 / DSM 18972 / AmH).